Reading from the N-terminus, the 72-residue chain is Phosphonoacetate hydrolase (72 aa).

Monomer. Requires Unlike bacterial phosphonoacetate hydrolase, does not require zinc as a cofactor. as cofactor.

The enzyme catalyses phosphonoacetate + H2O = acetate + phosphate + H(+). With respect to regulation, unaffected by EDTA or Ca(2+), Co(2+), Cu(2+), Mg(2+), Mn(2+), Ni(2+) and Zn(2+). The protein is Phosphonoacetate hydrolase of Penicillium oxalicum.